A 256-amino-acid chain; its full sequence is L-rhamnose 1-dehydrogenase (NAD(P)(+)) (256 aa).

NADP(+)-binding residues include Gly12, Ser14, Arg15, Ile17, Ser37, Asp66, Ala67, and Asn93. Ser146 acts as the Proton donor in catalysis. Positions 146, 148, 156, and 159 each coordinate beta-L-rhamnose. NADP(+)-binding residues include Tyr159 and Lys163. Residue Tyr159 is the Proton acceptor of the active site. Lys163 functions as the Lowers pKa of active site Tyr in the catalytic mechanism. Thr191 serves as a coordination point for beta-L-rhamnose. Residue Ile192 participates in NADP(+) binding. A beta-L-rhamnose-binding site is contributed by Asn197.

Belongs to the short-chain dehydrogenases/reductases (SDR) family.

It catalyses the reaction L-rhamnofuranose + NAD(+) = L-rhamnono-1,4-lactone + NADH + H(+). The enzyme catalyses L-rhamnofuranose + NADP(+) = L-rhamnono-1,4-lactone + NADPH + H(+). It functions in the pathway carbohydrate degradation; L-rhamnose degradation. In terms of biological role, NAD(P)-dependent dehydrogenase that catalyzes the oxidation of L-rhamnose to L-rhamnono-1,4-lactone. Also shows high activity with L-lyxose and low activity with L-mannose and L-fucose. Can utilize either NAD(+) or NADP(+), with a strong preference for NADP(+). Catalyzes the first step in an alternative pathway for rhamnose utilization that does not involve phosphorylated intermediates. This is L-rhamnose 1-dehydrogenase (NAD(P)(+)) from Azotobacter vinelandii (strain DJ / ATCC BAA-1303).